The chain runs to 220 residues: uncharacterized protein (220 aa).

The protein belongs to the DadA oxidoreductase family. The cofactor is FAD.

This is an uncharacterized protein from Halorhodospira halophila (Ectothiorhodospira halophila).